Consider the following 205-residue polypeptide: NADH-ubiquinone oxidoreductase chain 6 (205 aa).

The next 3 membrane-spanning stretches (helical) occupy residues 48–68 (FFAM…FLFV), 86–106 (YLPV…FILD), and 150–170 (VWFL…IVLT).

It belongs to the complex I subunit 6 family. As to quaternary structure, complex I is composed of about 45 different subunits.

Its subcellular location is the mitochondrion membrane. It carries out the reaction a ubiquinone + NADH + 5 H(+)(in) = a ubiquinol + NAD(+) + 4 H(+)(out). Its function is as follows. Core subunit of the mitochondrial membrane respiratory chain NADH dehydrogenase (Complex I) that is believed to belong to the minimal assembly required for catalysis. Complex I functions in the transfer of electrons from NADH to the respiratory chain. The immediate electron acceptor for the enzyme is believed to be ubiquinone. The protein is NADH-ubiquinone oxidoreductase chain 6 (ND6) of Brassica campestris (Field mustard).